Here is a 352-residue protein sequence, read N- to C-terminus: Protein-glutamate methylesterase/protein-glutamine glutaminase 2 (352 aa).

In terms of domain architecture, Response regulatory spans 1–116; that stretch reads MVVDDSAVVR…KQFLTDSADE (116 aa). Aspartate 50 carries the post-translational modification 4-aspartylphosphate. The region spanning 162-352 is the CheB-type methylesterase domain; it reads AQTTERIVAI…MAREIVTQLQ (191 aa). Residues serine 174, histidine 200, and aspartate 296 contribute to the active site.

It belongs to the CheB family. Post-translationally, phosphorylated by CheA. Phosphorylation of the N-terminal regulatory domain activates the methylesterase activity.

The protein localises to the cytoplasm. It carries out the reaction [protein]-L-glutamate 5-O-methyl ester + H2O = L-glutamyl-[protein] + methanol + H(+). The catalysed reaction is L-glutaminyl-[protein] + H2O = L-glutamyl-[protein] + NH4(+). In terms of biological role, involved in chemotaxis. Part of a chemotaxis signal transduction system that modulates chemotaxis in response to various stimuli. Catalyzes the demethylation of specific methylglutamate residues introduced into the chemoreceptors (methyl-accepting chemotaxis proteins or MCP) by CheR. Also mediates the irreversible deamidation of specific glutamine residues to glutamic acid. The polypeptide is Protein-glutamate methylesterase/protein-glutamine glutaminase 2 (Xanthomonas axonopodis pv. citri (strain 306)).